The sequence spans 298 residues: Porphobilinogen deaminase (298 aa).

An S-(dipyrrolylmethanemethyl)cysteine modification is found at Cys-239.

The protein belongs to the HMBS family. Monomer. Dipyrromethane serves as cofactor.

The enzyme catalyses 4 porphobilinogen + H2O = hydroxymethylbilane + 4 NH4(+). The protein operates within porphyrin-containing compound metabolism; protoporphyrin-IX biosynthesis; coproporphyrinogen-III from 5-aminolevulinate: step 2/4. Functionally, tetrapolymerization of the monopyrrole PBG into the hydroxymethylbilane pre-uroporphyrinogen in several discrete steps. This is Porphobilinogen deaminase from Ehrlichia chaffeensis (strain ATCC CRL-10679 / Arkansas).